The chain runs to 592 residues: Potassium-transporting ATPase potassium-binding subunit (592 aa).

10 helical membrane-spanning segments follow: residues 7–27 (ILLGIFLVVLLLTVKPLGTYI), 60–80 (LKYACAILLFNVLGVLAVYAL), 132–152 (ALAVQNFFSAATGIVVVIALI), 175–195 (LHVLLPISIIYAVFLTGQGVI), 279–299 (LSNFIQMLSIFLIPAALCFTF), 310–330 (WAVLAAMTLMFVALAYTAMHF), 409–429 (GLYGMLVFAIMAVFIAGLMIG), 449–469 (IAILVTPLLVLVGTAIAVMLA), 513–533 (VMLGIAMWFGRFGVIVPVLAI), and 556–576 (LFVTLLIGTVLLVGLLNYVPA).

It belongs to the KdpA family. As to quaternary structure, the system is composed of three essential subunits: KdpA, KdpB and KdpC.

Its subcellular location is the cell inner membrane. Functionally, part of the high-affinity ATP-driven potassium transport (or Kdp) system, which catalyzes the hydrolysis of ATP coupled with the electrogenic transport of potassium into the cytoplasm. This subunit binds the periplasmic potassium ions and delivers the ions to the membrane domain of KdpB through an intramembrane tunnel. This chain is Potassium-transporting ATPase potassium-binding subunit, found in Dechloromonas aromatica (strain RCB).